Here is a 38-residue protein sequence, read N- to C-terminus: Large ribosomal subunit protein bL36 (38 aa).

This sequence belongs to the bacterial ribosomal protein bL36 family.

The chain is Large ribosomal subunit protein bL36 from Sorangium cellulosum (strain So ce56) (Polyangium cellulosum (strain So ce56)).